A 303-amino-acid polypeptide reads, in one-letter code: MKLRVATRGSKLSIAQTMIALEAIKRVEPSLEYELVIVKTRGDIHQDKPFTAIGGKGLFEKEVNLAVLEGRADIAVHSLKDVPSAISPGLVLAMTPPRDPPYDVLVVRGGKEKTIWDLPSGAIVGTSSARRVAMLKHVRRDLVFKVLRGNVDTRLRKLEQGQYDAIVLAEAGLKRLGVDIEYWRIPPDILPPAPGQGIIGVYTLSSRSDILPILEKASDQKAMAEARAERAFLAYAGGGCHTPLGAYAELRGNTLYFHAALASPDGSRRVEVRVEGDPDKPTQVGLEAAFELRRLAAREGISL.

An S-(dipyrrolylmethanemethyl)cysteine modification is found at Cys-240.

The protein belongs to the HMBS family. Dipyrromethane is required as a cofactor.

The enzyme catalyses 4 porphobilinogen + H2O = hydroxymethylbilane + 4 NH4(+). It participates in porphyrin-containing compound metabolism; protoporphyrin-IX biosynthesis; coproporphyrinogen-III from 5-aminolevulinate: step 2/4. In terms of biological role, tetrapolymerization of the monopyrrole PBG into the hydroxymethylbilane pre-uroporphyrinogen in several discrete steps. This is Probable porphobilinogen deaminase from Hyperthermus butylicus (strain DSM 5456 / JCM 9403 / PLM1-5).